A 261-amino-acid polypeptide reads, in one-letter code: Small ribosomal subunit protein uS2 (261 aa).

The segment at 224–261 is disordered; that stretch reads GKQGQDDSEDVEKEMADKAAAENDDEESIEEVVEKSED. Acidic residues predominate over residues 245–254; sequence ENDDEESIEE.

The protein belongs to the universal ribosomal protein uS2 family.

The chain is Small ribosomal subunit protein uS2 from Lactobacillus gasseri (strain ATCC 33323 / DSM 20243 / BCRC 14619 / CIP 102991 / JCM 1131 / KCTC 3163 / NCIMB 11718 / NCTC 13722 / AM63).